A 361-amino-acid chain; its full sequence is Phospho-N-acetylmuramoyl-pentapeptide-transferase (361 aa).

Helical transmembrane passes span 21–41 (YLTV…LWIG), 74–94 (MGGI…ANLA), 97–117 (YVWF…VDDY), 132–152 (WKYF…YAIG), 168–188 (VMPQ…VGTG), 199–219 (GLAI…AWAT), 239–259 (LVIF…FNTY), 264–284 (FMGD…AVLV), 288–308 (FLLV…ILQV), and 339–359 (VIIR…ITLK).

It belongs to the glycosyltransferase 4 family. MraY subfamily. The cofactor is Mg(2+).

It localises to the cell inner membrane. The catalysed reaction is UDP-N-acetyl-alpha-D-muramoyl-L-alanyl-gamma-D-glutamyl-meso-2,6-diaminopimeloyl-D-alanyl-D-alanine + di-trans,octa-cis-undecaprenyl phosphate = di-trans,octa-cis-undecaprenyl diphospho-N-acetyl-alpha-D-muramoyl-L-alanyl-D-glutamyl-meso-2,6-diaminopimeloyl-D-alanyl-D-alanine + UMP. It functions in the pathway cell wall biogenesis; peptidoglycan biosynthesis. Its function is as follows. Catalyzes the initial step of the lipid cycle reactions in the biosynthesis of the cell wall peptidoglycan: transfers peptidoglycan precursor phospho-MurNAc-pentapeptide from UDP-MurNAc-pentapeptide onto the lipid carrier undecaprenyl phosphate, yielding undecaprenyl-pyrophosphoryl-MurNAc-pentapeptide, known as lipid I. The sequence is that of Phospho-N-acetylmuramoyl-pentapeptide-transferase from Histophilus somni (strain 129Pt) (Haemophilus somnus).